A 72-amino-acid chain; its full sequence is Translation initiation factor IF-1 (72 aa).

The 72-residue stretch at 1 to 72 folds into the S1-like domain; it reads MSKEELIEFE…TKGRITYRFK (72 aa).

It belongs to the IF-1 family. In terms of assembly, component of the 30S ribosomal translation pre-initiation complex which assembles on the 30S ribosome in the order IF-2 and IF-3, IF-1 and N-formylmethionyl-tRNA(fMet); mRNA recruitment can occur at any time during PIC assembly.

Its subcellular location is the cytoplasm. In terms of biological role, one of the essential components for the initiation of protein synthesis. Stabilizes the binding of IF-2 and IF-3 on the 30S subunit to which N-formylmethionyl-tRNA(fMet) subsequently binds. Helps modulate mRNA selection, yielding the 30S pre-initiation complex (PIC). Upon addition of the 50S ribosomal subunit IF-1, IF-2 and IF-3 are released leaving the mature 70S translation initiation complex. The protein is Translation initiation factor IF-1 of Hyphomonas neptunium (strain ATCC 15444).